The primary structure comprises 86 residues: Mu-theraphotoxin-Cg2a 3 (86 aa).

The N-terminal stretch at 1-21 (MKVSVVITLAVLGVMFVWASA) is a signal peptide. The propeptide occupies 22-50 (AELKERGSDQRDSPAWIKSMERIFQSEER). Intrachain disulfides connect Cys52–Cys66, Cys59–Cys71, and Cys65–Cys78. The residue at position 84 (Phe84) is a Phenylalanine amide.

It belongs to the neurotoxin 10 (Hwtx-1) family. 37 (Jztx-31) subfamily. Expressed by the venom gland.

It is found in the secreted. Inhibits both peak current and fast inactivation of voltage-gated sodium channels (Nav) channels. Inhibits the inactivation of Nav on DRG neurons (EC(50)=1.77 uM) and peak current of cardiac myocytes (IC(50)=0.90 uM). This Chilobrachys guangxiensis (Chinese earth tiger tarantula) protein is Mu-theraphotoxin-Cg2a 3.